The following is a 434-amino-acid chain: MSILKVHAREIFDSRGNPTVEVDLFTSKGLFRAAVPSGASTGIYEALELRDNDKTRYMGKGVSKAVEHINKTIAPALVSKKLNVTEQEKIDKLMIEMDGTENKSKFGANAILGVSLAVCKAGAVEKGVPLYRHIADLAGNSEVILPVPAFNVINGGSHAGNKLAMQEFMILPVGAANFREAMRIGAEVYHNLKNVIKEKYGKDATNVGDEGGFAPNILENKEGLELLKTAIGKAGYTDKVVIGMDVAASEFFRSGKYDLDFKSPDDPSRYISPDQLADLYKSFIKDYPVVSIEDPFDQDDWGAWQKFTASAGIQVVGDDLTVANPKRIAKAVNEKSCNCLLLKVNQIGSVTESLQACKLAQANGWGVMVSHRSGETEDTFIADLVVGLCTGQIKTGAPCRSERLAKYNQLLRIEEELGSKAKFAGRNFRNPLAK.

Ser-2 is subject to N-acetylserine. Residue Lys-5 is modified to N6-acetyllysine. Position 27 is a phosphoserine (Ser-27). Residue Ser-40 coordinates Mg(2+). Tyr-44 is subject to Phosphotyrosine. An N6-acetyllysine; alternate modification is found at Lys-60. Position 60 is an N6-succinyllysine; alternate (Lys-60). Lys-64 and Lys-71 each carry N6-acetyllysine. Residue Lys-89 is modified to N6-acetyllysine; alternate. Lys-89 is subject to N6-succinyllysine; alternate. N6-acetyllysine is present on residues Lys-92 and Lys-126. Residues His-158 and Glu-167 each contribute to the substrate site. N6-acetyllysine is present on residues Lys-193 and Lys-199. Lys-202 is subject to N6-acetyllysine; alternate. Lys-202 participates in a covalent cross-link: Glycyl lysine isopeptide (Lys-Gly) (interchain with G-Cter in SUMO2); alternate. The Proton donor role is filled by Glu-210. 2 positions are modified to N6-acetyllysine; alternate: Lys-228 and Lys-233. N6-succinyllysine; alternate is present on Lys-228. Lys-228 is subject to N6-(2-hydroxyisobutyryl)lysine; alternate. An N6-malonyllysine; alternate modification is found at Lys-233. Residue Asp-245 participates in Mg(2+) binding. The residue at position 254 (Ser-254) is a Phosphoserine. Position 256 is an N6-acetyllysine (Lys-256). A phosphoserine mark is found at Ser-263 and Ser-272. Residue Lys-281 is modified to N6-acetyllysine; alternate. Lys-281 is modified (N6-(2-hydroxyisobutyryl)lysine; alternate). N6-acetyllysine is present on Lys-285. Position 287 is a phosphotyrosine (Tyr-287). A Phosphoserine modification is found at Ser-291. Glu-293 and Asp-318 together coordinate Mg(2+). 2 residues coordinate substrate: Glu-293 and Asp-318. Residues Lys-335 and Lys-343 each carry the N6-acetyllysine modification. Lys-343 acts as the Proton acceptor in catalysis. Substrate-binding positions include 370 to 373 (SHRS) and Lys-394. Residues 405–434 (AKYNQLLRIEEELGSKAKFAGRNFRNPLAK) are required for interaction with PLG. Lys-406 is subject to N6-acetyllysine. At Lys-420 the chain carries N6-acetyllysine; alternate. Lys-420 carries the N6-succinyllysine; alternate modification. N6-malonyllysine; alternate is present on Lys-420.

This sequence belongs to the enolase family. Mammalian enolase is composed of 3 isozyme subunits, alpha, beta and gamma, which can form homodimers or heterodimers which are cell-type and development-specific. ENO1 interacts with PLG in the neuronal plasma membrane and promotes its activation. The C-terminal lysine is required for this binding. Interacts with ENO4 and PGAM2. Interacts with CMTM6. Mg(2+) serves as cofactor. ISGylated. In terms of processing, lysine 2-hydroxyisobutyrylation (Khib) by p300/EP300 activates the phosphopyruvate hydratase activity.

Its subcellular location is the cytoplasm. It is found in the cell membrane. The enzyme catalyses (2R)-2-phosphoglycerate = phosphoenolpyruvate + H2O. Its pathway is carbohydrate degradation; glycolysis; pyruvate from D-glyceraldehyde 3-phosphate: step 4/5. In terms of biological role, glycolytic enzyme the catalyzes the conversion of 2-phosphoglycerate to phosphoenolpyruvate. In addition to glycolysis, involved in various processes such as growth control, hypoxia tolerance and allergic responses. May also function in the intravascular and pericellular fibrinolytic system due to its ability to serve as a receptor and activator of plasminogen on the cell surface of several cell-types such as leukocytes and neurons. Stimulates immunoglobulin production. This is Alpha-enolase (ENO1) from Macaca fascicularis (Crab-eating macaque).